A 266-amino-acid polypeptide reads, in one-letter code: MFKLLSKLLVYLTASIMAIASPLAFSVDSSGEYPTVSEIPVGEVRLYQIADGVWSHIATQSFDGAVYPSNGLIVRDGDELLLIDTAWGAKNTAALLAEIEKQIGLPVTRAVSTHFHDDRVGGVDVLRAAGVATYASPSTRRLAEVEGNEIPTHSLEGLSSSGDAVRFGPVELFYPGAAHSTDNLVVYVPSASVLYGGCAIYELSRTSAGNVADADLAEWPTSIERIQQHYPEAQFVIPGHGLPGGLDLLKHTTNVVKAHTNRSVVE.

Positions 1 to 20 (MFKLLSKLLVYLTASIMAIA) are cleaved as a signal peptide. Zn(2+)-binding residues include H114, H116, and C198.

Belongs to the metallo-beta-lactamase superfamily. Class-B beta-lactamase family. Monomer. The cofactor is Zn(2+).

It is found in the periplasm. It carries out the reaction a beta-lactam + H2O = a substituted beta-amino acid. Inhibited by chelating agents such as EDTA. Inhibited by a fungal natural product, aspergillomarasmine A (AMA). Inhibited by 2-triazolylthioacetamides. Functionally, class B beta-lactamase which confers resistance to the beta-lactam antibiotics, including penicillins, cephalosporins and carbapenems. Acts via hydrolysis of the beta-lactam ring. Has penicillin-, cephalosporin- and carbapenem-hydrolyzing activities. This is Metallo-beta-lactamase VIM-2 from Escherichia coli.